The sequence spans 288 residues: Zinc finger protein 42 (288 aa).

Composition is skewed to basic and acidic residues over residues 1–11 (MNEQKMNEQMK) and 26–38 (ALDRLTLKQDEAR). Positions 1 to 48 (MNEQKMNEQMKKTAKTSGQKGPGGRALDRLTLKQDEARPVQNTRVEAP) are disordered. 4 C2H2-type zinc fingers span residues 170-194 (LECPQAGCKKKLRGKTALRKHMLVH), 199-221 (HVCAECGKAFTESSKLKRHFLVH), 227-251 (YQCTFEGCGKRFSLDFNLRTHIRIH), and 258-281 (VCPFDGCEKSFIQSNNQKIHILTH). Residues K213 and K215 each participate in a glycyl lysine isopeptide (Lys-Gly) (interchain with G-Cter in ubiquitin) cross-link.

It belongs to the krueppel C2H2-type zinc-finger protein family. Polyubiquitinated by RNF12, leading to proteasomal degradation. Restricted to testis, to germ cells in the early stages of spermatogenesis. Not expressed in spermatids, nor spermatozoa. Expressed in embryonic stem (ES) cells.

The protein resides in the nucleus. Involved in the reprogramming of X-chromosome inactivation during the acquisition of pluripotency. Required for efficient elongation of TSIX, a non-coding RNA antisense to XIST. Binds DXPas34 enhancer within the TSIX promoter. Involved in ES cell self-renewal. The chain is Zinc finger protein 42 (Zfp42) from Mus musculus (Mouse).